The following is a 371-amino-acid chain: Ribosomal RNA small subunit methyltransferase H (371 aa).

S-adenosyl-L-methionine is bound by residues 43–45, D62, L96, D110, and Q117; that span reads GGH. Residues 315-371 are disordered; sequence AAERLDPTQQQRQRTDRERYRRQVRAMHQPGTGSAVRRPVSGDDGTGTDEEGEGHDD. Residues 360 to 371 show a composition bias toward acidic residues; it reads TGTDEEGEGHDD.

This sequence belongs to the methyltransferase superfamily. RsmH family.

It is found in the cytoplasm. It catalyses the reaction cytidine(1402) in 16S rRNA + S-adenosyl-L-methionine = N(4)-methylcytidine(1402) in 16S rRNA + S-adenosyl-L-homocysteine + H(+). Functionally, specifically methylates the N4 position of cytidine in position 1402 (C1402) of 16S rRNA. This chain is Ribosomal RNA small subunit methyltransferase H, found in Salinispora tropica (strain ATCC BAA-916 / DSM 44818 / JCM 13857 / NBRC 105044 / CNB-440).